The chain runs to 329 residues: Endonuclease 8-like 2 (329 aa).

Residue Pro-2 is the Schiff-base intermediate with DNA of the active site. Glu-3 acts as the Proton donor in catalysis. Lys-50 acts as the Proton donor; for beta-elimination activity in catalysis. Lys-50 carries the N6-acetyllysine modification. Ser-68 is subject to Phosphoserine. A disordered region spans residues 68-116 (SLLSEPLREGEQKDKARHHQEASDPSSWSPGGDSAVPSGDDGLQCLGGD). Basic and acidic residues predominate over residues 73 to 89 (PLREGEQKDKARHHQEA). Low complexity predominate over residues 90 to 102 (SDPSSWSPGGDSA). N6-acetyllysine is present on Lys-149. Position 227 (Asn-227) interacts with DNA. The FPG-type zinc finger occupies 280–316 (QIYQKEQCPAGHQVVRESLGPPGGFQRLTWWCPQCQP). The active-site Proton donor; for delta-elimination activity is the Arg-306.

This sequence belongs to the FPG family. Binds EP300.

The protein localises to the nucleus. The catalysed reaction is 2'-deoxyribonucleotide-(2'-deoxyribose 5'-phosphate)-2'-deoxyribonucleotide-DNA = a 3'-end 2'-deoxyribonucleotide-(2,3-dehydro-2,3-deoxyribose 5'-phosphate)-DNA + a 5'-end 5'-phospho-2'-deoxyribonucleoside-DNA + H(+). Acetylation of Lys-50 leads to loss of DNA nicking activity. Involved in base excision repair of DNA damaged by oxidation or by mutagenic agents. Has DNA glycosylase activity towards 5-hydroxyuracil and other oxidized derivatives of cytosine with a preference for mismatched double-stranded DNA (DNA bubbles). Has low or no DNA glycosylase activity towards thymine glycol, 2-hydroxyadenine, hypoxanthine and 8-oxoguanine. Has AP (apurinic/apyrimidinic) lyase activity and introduces nicks in the DNA strand. Cleaves the DNA backbone by beta-delta elimination to generate a single-strand break at the site of the removed base with both 3'- and 5'-phosphates. In Bos taurus (Bovine), this protein is Endonuclease 8-like 2 (NEIL2).